We begin with the raw amino-acid sequence, 88 residues long: Small ribosomal subunit protein bS16 (88 aa).

Belongs to the bacterial ribosomal protein bS16 family.

The polypeptide is Small ribosomal subunit protein bS16 (Sorangium cellulosum (strain So ce56) (Polyangium cellulosum (strain So ce56))).